A 442-amino-acid polypeptide reads, in one-letter code: Exodeoxyribonuclease 7 large subunit (442 aa).

This sequence belongs to the XseA family. In terms of assembly, heterooligomer composed of large and small subunits.

The protein localises to the cytoplasm. It carries out the reaction Exonucleolytic cleavage in either 5'- to 3'- or 3'- to 5'-direction to yield nucleoside 5'-phosphates.. Bidirectionally degrades single-stranded DNA into large acid-insoluble oligonucleotides, which are then degraded further into small acid-soluble oligonucleotides. This Rickettsia bellii (strain OSU 85-389) protein is Exodeoxyribonuclease 7 large subunit.